The chain runs to 262 residues: Phosphatidylglycerol--prolipoprotein diacylglyceryl transferase (262 aa).

Helical transmembrane passes span 17-37 (FAIHWYGLMYLMAFVQFLLLG), 59-79 (LLFAGVLGVVLGGRLGYTLFY), 94-114 (IWEGGMSFHGGLLGVLAALYW), and 121-141 (TTFFVVSDLVAPLVPFGLAFG). Arginine 142 contributes to the a 1,2-diacyl-sn-glycero-3-phospho-(1'-sn-glycerol) binding site. Transmembrane regions (helical) follow at residues 176-196 (QIYQLLGEGVLLGIALWFYAG), 201-221 (VGQVSGFFLLGYGICRFLAEY), and 231-251 (LLGLGLSMGQWLCVPMIFFGI).

This sequence belongs to the Lgt family.

The protein resides in the cell inner membrane. The enzyme catalyses L-cysteinyl-[prolipoprotein] + a 1,2-diacyl-sn-glycero-3-phospho-(1'-sn-glycerol) = an S-1,2-diacyl-sn-glyceryl-L-cysteinyl-[prolipoprotein] + sn-glycerol 1-phosphate + H(+). It functions in the pathway protein modification; lipoprotein biosynthesis (diacylglyceryl transfer). Its function is as follows. Catalyzes the transfer of the diacylglyceryl group from phosphatidylglycerol to the sulfhydryl group of the N-terminal cysteine of a prolipoprotein, the first step in the formation of mature lipoproteins. This is Phosphatidylglycerol--prolipoprotein diacylglyceryl transferase from Polynucleobacter necessarius subsp. necessarius (strain STIR1).